We begin with the raw amino-acid sequence, 275 residues long: Formamidopyrimidine-DNA glycosylase (275 aa).

The Schiff-base intermediate with DNA role is filled by Pro-2. Residue Glu-3 is the Proton donor of the active site. Lys-59 acts as the Proton donor; for beta-elimination activity in catalysis. Residues His-92, Arg-111, and Arg-155 each coordinate DNA. An FPG-type zinc finger spans residues 240–274 (NVYGRAGKACPKCGTTIEKQVLGQRSSYYCPQCQR). The Proton donor; for delta-elimination activity role is filled by Arg-264.

The protein belongs to the FPG family. As to quaternary structure, monomer. It depends on Zn(2+) as a cofactor.

It catalyses the reaction Hydrolysis of DNA containing ring-opened 7-methylguanine residues, releasing 2,6-diamino-4-hydroxy-5-(N-methyl)formamidopyrimidine.. It carries out the reaction 2'-deoxyribonucleotide-(2'-deoxyribose 5'-phosphate)-2'-deoxyribonucleotide-DNA = a 3'-end 2'-deoxyribonucleotide-(2,3-dehydro-2,3-deoxyribose 5'-phosphate)-DNA + a 5'-end 5'-phospho-2'-deoxyribonucleoside-DNA + H(+). Functionally, involved in base excision repair of DNA damaged by oxidation or by mutagenic agents. Acts as a DNA glycosylase that recognizes and removes damaged bases. Has a preference for oxidized purines, such as 7,8-dihydro-8-oxoguanine (8-oxoG). Has AP (apurinic/apyrimidinic) lyase activity and introduces nicks in the DNA strand. Cleaves the DNA backbone by beta-delta elimination to generate a single-strand break at the site of the removed base with both 3'- and 5'-phosphates. The sequence is that of Formamidopyrimidine-DNA glycosylase from Magnetococcus marinus (strain ATCC BAA-1437 / JCM 17883 / MC-1).